Consider the following 346-residue polypeptide: Phosphoribosylformylglycinamidine cyclo-ligase (346 aa).

Belongs to the AIR synthase family.

Its subcellular location is the cytoplasm. It catalyses the reaction 2-formamido-N(1)-(5-O-phospho-beta-D-ribosyl)acetamidine + ATP = 5-amino-1-(5-phospho-beta-D-ribosyl)imidazole + ADP + phosphate + H(+). It participates in purine metabolism; IMP biosynthesis via de novo pathway; 5-amino-1-(5-phospho-D-ribosyl)imidazole from N(2)-formyl-N(1)-(5-phospho-D-ribosyl)glycinamide: step 2/2. The chain is Phosphoribosylformylglycinamidine cyclo-ligase from Photobacterium profundum (strain SS9).